Reading from the N-terminus, the 293-residue chain is Protease HtpX (293 aa).

2 helical membrane passes run 4 to 24 and 34 to 54; these read IALFLLTNLAVMVVFGLVLSL and GLLIMALLFGFGGSFISLLMS. His139 serves as a coordination point for Zn(2+). Glu140 is a catalytic residue. His143 contacts Zn(2+). The next 2 helical transmembrane spans lie at 158–178 and 193–213; these read VVNTFVIFISRILAQIAAGFM and LIYFAVAMVLELVFGILASII. Glu222 is a Zn(2+) binding site.

It belongs to the peptidase M48B family. Requires Zn(2+) as cofactor.

It localises to the cell inner membrane. The sequence is that of Protease HtpX from Enterobacter sp. (strain 638).